The primary structure comprises 205 residues: 3-demethoxyubiquinol 3-hydroxylase (205 aa).

Fe cation-binding residues include glutamate 54, glutamate 84, histidine 87, glutamate 136, glutamate 168, and histidine 171.

It belongs to the COQ7 family. It depends on Fe cation as a cofactor.

It localises to the cell membrane. It carries out the reaction a 5-methoxy-2-methyl-3-(all-trans-polyprenyl)benzene-1,4-diol + AH2 + O2 = a 3-demethylubiquinol + A + H2O. Its pathway is cofactor biosynthesis; ubiquinone biosynthesis. Its function is as follows. Catalyzes the hydroxylation of 2-nonaprenyl-3-methyl-6-methoxy-1,4-benzoquinol during ubiquinone biosynthesis. The chain is 3-demethoxyubiquinol 3-hydroxylase from Paracidovorax citrulli (strain AAC00-1) (Acidovorax citrulli).